The sequence spans 332 residues: Inositol 2-dehydrogenase 2 (332 aa).

It belongs to the Gfo/Idh/MocA family. In terms of assembly, homotetramer.

The enzyme catalyses myo-inositol + NAD(+) = scyllo-inosose + NADH + H(+). Functionally, involved in the oxidation of myo-inositol (MI) to 2-keto-myo-inositol (2KMI or 2-inosose). This is Inositol 2-dehydrogenase 2 from Paenarthrobacter aurescens (strain TC1).